The following is a 250-amino-acid chain: MEREGLEWIVAFLRMLVSWGASCAMIFGGVVPYIPQYRDIRRTQNAEGFSIYVCLMLLIANILRILFWFGHHFESPLLWQSIIMIVTMLLMLKLCTEVRVANELNPKRRSFTDFDTAFFWHWTRFIDFIQCVLAFTGVTGYITYLLLDSPLFVEILGFLAVFTEALLGVPQLYRNHQNYSTEGMSIKMVLMWTSGDTFKSAYFVLNQAPFQFSICGLLQVFVDIAILLQVYLYSAYPQKPVSHATSAKAL.

In terms of domain architecture, PQ-loop 1 spans R14–Q80. 6 helical membrane-spanning segments follow: residues M15–P35, F49–F69, H72–L92, F118–V138, L151–Y173, and F212–L232. A PQ-loop 2 domain is found at S149–C215.

It localises to the membrane. The polypeptide is Solute carrier family 66 member 2 (slc66a2) (Xenopus laevis (African clawed frog)).